Reading from the N-terminus, the 357-residue chain is MNHPTLTIDPGAVAANWQALAARHTGEVAGVVKADAYGLGAALIAPALAAAGCRSFFVATLDEALSLRALLPAARIGVLNGCPPGEEGTMRARELRPVLGSLAACARWRGAAGDDKAPPSFLHLDTGMNRLGLDRDEAAHLIAHPTLLDGLGLTHVMTHLVAAEEPDASANAAQRERFAAFAARFPWLRTSLANSSGLFLGPGFGSDLARPGYALYGGNPTPTAANPMRPAIALAAPILQIRAIASGETVGYNGTWRAARPSRIATIGVGYADGLPRSLSNRLTARWQGKIIPVAGRLSMDLTTFDVTDHPDIAPGDVIELIGPGHDIDAFAAEAGTIGYEILTSLGPRYRRVVKSV.

Residue K33 is the Proton acceptor; specific for D-alanine of the active site. The residue at position 33 (K33) is an N6-(pyridoxal phosphate)lysine. Position 130 (R130) interacts with substrate. The active-site Proton acceptor; specific for L-alanine is the Y252. Residue M300 coordinates substrate.

Belongs to the alanine racemase family. Pyridoxal 5'-phosphate serves as cofactor.

The catalysed reaction is L-alanine = D-alanine. It participates in amino-acid biosynthesis; D-alanine biosynthesis; D-alanine from L-alanine: step 1/1. In terms of biological role, catalyzes the interconversion of L-alanine and D-alanine. May also act on other amino acids. This is Alanine racemase (alr) from Acidiphilium cryptum (strain JF-5).